A 380-amino-acid polypeptide reads, in one-letter code: Cytochrome b (380 aa).

The next 4 helical transmembrane spans lie at 34 to 54 (FGSLLGICLATQILTGLLLAM), 78 to 99 (WLIRNLHANGASFFFICVYLHI), 114 to 134 (WNTGILLLLTLMATAFVGYVL), and 179 to 199 (FFALHFLLPFAIAGLTLIHLT). His84 and His98 together coordinate heme b. The heme b site is built by His183 and His197. His202 contacts a ubiquinone. Helical transmembrane passes span 227–247 (LKDALGFMLMFLPLTTLALFS), 289–309 (LGGVLALAASVLILFLSPLLH), 321–341 (LSQLLFWTLVANLFILTWVGS), and 348–368 (FIIIGQLASLTYFTILLILFP).

The protein belongs to the cytochrome b family. The cytochrome bc1 complex contains 11 subunits: 3 respiratory subunits (MT-CYB, CYC1 and UQCRFS1), 2 core proteins (UQCRC1 and UQCRC2) and 6 low-molecular weight proteins (UQCRH/QCR6, UQCRB/QCR7, UQCRQ/QCR8, UQCR10/QCR9, UQCR11/QCR10 and a cleavage product of UQCRFS1). This cytochrome bc1 complex then forms a dimer. It depends on heme b as a cofactor.

It is found in the mitochondrion inner membrane. In terms of biological role, component of the ubiquinol-cytochrome c reductase complex (complex III or cytochrome b-c1 complex) that is part of the mitochondrial respiratory chain. The b-c1 complex mediates electron transfer from ubiquinol to cytochrome c. Contributes to the generation of a proton gradient across the mitochondrial membrane that is then used for ATP synthesis. This chain is Cytochrome b (MT-CYB), found in Oceanites oceanicus (Wilson's storm petrel).